The primary structure comprises 286 residues: ATP synthase gamma chain (286 aa).

It belongs to the ATPase gamma chain family. F-type ATPases have 2 components, CF(1) - the catalytic core - and CF(0) - the membrane proton channel. CF(1) has five subunits: alpha(3), beta(3), gamma(1), delta(1), epsilon(1). CF(0) has three main subunits: a, b and c.

Its subcellular location is the cell membrane. Produces ATP from ADP in the presence of a proton gradient across the membrane. The gamma chain is believed to be important in regulating ATPase activity and the flow of protons through the CF(0) complex. The protein is ATP synthase gamma chain of Ureaplasma parvum serovar 3 (strain ATCC 27815 / 27 / NCTC 11736).